Consider the following 253-residue polypeptide: Indole-3-glycerol phosphate synthase (253 aa).

Belongs to the TrpC family.

The enzyme catalyses 1-(2-carboxyphenylamino)-1-deoxy-D-ribulose 5-phosphate + H(+) = (1S,2R)-1-C-(indol-3-yl)glycerol 3-phosphate + CO2 + H2O. The protein operates within amino-acid biosynthesis; L-tryptophan biosynthesis; L-tryptophan from chorismate: step 4/5. The polypeptide is Indole-3-glycerol phosphate synthase (Bacillus thuringiensis subsp. konkukian (strain 97-27)).